The following is a 331-amino-acid chain: Cilia- and flagella-associated protein 119 (331 aa).

S34 carries the phosphoserine modification. Disordered regions lie at residues L236–E271 and S309–K331. The stretch at V286 to R317 forms a coiled coil.

Its subcellular location is the cell projection. The protein localises to the cilium. The protein resides in the flagellum. It localises to the cytoplasmic vesicle. It is found in the secretory vesicle. Its subcellular location is the acrosome. The protein localises to the cytoplasm. The chain is Cilia- and flagella-associated protein 119 from Homo sapiens (Human).